Here is a 132-residue protein sequence, read N- to C-terminus: T-cell receptor alpha chain V region CTL-F3 (132 aa).

Positions 1–22 (MNMRPDTCSVLVLLLMLRRNNG) are cleaved as a signal peptide. Residues 23–114 (DSVTQTEGLV…DSALYYCALS (92 aa)) are v segment. An N-linked (GlcNAc...) asparagine glycan is attached at asparagine 43. Cysteine 44 and cysteine 111 are disulfide-bonded. The segment at 115–132 (NAGAKLTFGGGTRLTVRP) is j segment.

The protein is T-cell receptor alpha chain V region CTL-F3 of Mus musculus (Mouse).